A 500-amino-acid chain; its full sequence is L-arabinose isomerase (500 aa).

Mn(2+) contacts are provided by Glu306, Glu333, His350, and His450.

The protein belongs to the arabinose isomerase family. In terms of assembly, homohexamer. Requires Mn(2+) as cofactor.

The catalysed reaction is beta-L-arabinopyranose = L-ribulose. The protein operates within carbohydrate degradation; L-arabinose degradation via L-ribulose; D-xylulose 5-phosphate from L-arabinose (bacterial route): step 1/3. Catalyzes the conversion of L-arabinose to L-ribulose. The chain is L-arabinose isomerase from Salmonella arizonae (strain ATCC BAA-731 / CDC346-86 / RSK2980).